Consider the following 427-residue polypeptide: Carboxyl-terminal-processing protease (427 aa).

A signal peptide spans 1–31; sequence MGKRTRRFWALAFSLLMGALIYLGNTPSALA. In terms of domain architecture, PDZ spans 104 to 186; that stretch reads NLQVTTTGEL…TKVSLEILSA (83 aa). Catalysis depends on charge relay system residues Ser-313, Asp-324, and Lys-338.

It belongs to the peptidase S41A family.

It localises to the cellular thylakoid lumen. It catalyses the reaction The enzyme shows specific recognition of a C-terminal tripeptide, Xaa-Yaa-Zaa, in which Xaa is preferably Ala or Leu, Yaa is preferably Ala or Tyr, and Zaa is preferably Ala, but then cleaves at a variable distance from the C-terminus. A typical cleavage is -Ala-Ala-|-Arg-Ala-Ala-Lys-Glu-Asn-Tyr-Ala-Leu-Ala-Ala.. Functionally, cleavage of the 16 C-terminal residues from the D1 precursor of photosystem II (PSII). This proteolytic processing is necessary to allow the light-driven assembly of the oxygen-evolving cluster (a tetranuclear manganese), which is responsible for photosynthetic water oxidation. In Synechocystis sp. (strain ATCC 27184 / PCC 6803 / Kazusa), this protein is Carboxyl-terminal-processing protease (ctpA).